Here is a 673-residue protein sequence, read N- to C-terminus: Citrate exporter 1 (673 aa).

A disordered region spans residues 1-44; the sequence is MFNLNTKSSKEPEVTEVAVDSTPSSPVTRESSPESSPDNSAVDL. Residues 21-39 show a composition bias toward polar residues; that stretch reads STPSSPVTRESSPESSPDN. Residues 67-87 form a helical membrane-spanning segment; that stretch reads FLVFGAMAFCMLVSFMDQNGI. N99 is a glycosylation site (N-linked (GlcNAc...) asparagine). The next 4 helical transmembrane spans lie at 103 to 123, 133 to 153, 164 to 184, and 194 to 214; these read TISWAGTSGLIANTVFQVLYG, LVFMIVVCTLVCADIGCACAQ, FSGIANGGMSCLTMIVVSDIV, and GILGACVGLGNTIGPFLGAAF. N217 carries an N-linked (GlcNAc...) asparagine glycan. A run of 8 helical transmembrane segments spans residues 222 to 242, 261 to 281, 292 to 312, 322 to 342, 364 to 384, 393 to 413, 419 to 439, and 465 to 485; these read AIFYLLAPMGGLCAVVIFFIL, PGLFCSSVALVFLLVPIAGGG, ISMLCIGGVFFIAFFVIEGFF, IFGTKALFALMMHSVLLGIAY, AAGMSCALVTTQAVTTVISGQ, LEVIYFGFGIWTVGAIMKCFW, MALLIFSLLFEGAGVGCCFQP, and SFGGAVGLAVCSAILANSLKA. N526 carries N-linked (GlcNAc...) asparagine glycosylation. The helical transmembrane segment at 529 to 549 threads the bilayer; it reads HTVFVFLCPIVGACLLVTVFV. A compositionally biased stretch (basic and acidic residues) spans 564–596; the sequence is AKTVEDKDKDESGTDCEDMTKGEVLVSEKEGKL. Disordered regions lie at residues 564-608 and 636-673; these read AKTV…MHFG and FPPMDHNDVITPLEDFDESPLPPHSPNSSGKRVTIQEE. N599 and N662 each carry an N-linked (GlcNAc...) asparagine glycan.

The protein belongs to the major facilitator superfamily.

Its subcellular location is the cell membrane. The enzyme catalyses citrate(in) = citrate(out). Its function is as follows. Transmembrane transporter that exports citrate across the cell membrane. The chain is Citrate exporter 1 from Yarrowia lipolytica (strain CLIB 122 / E 150) (Yeast).